We begin with the raw amino-acid sequence, 92 residues long: SPbeta prophage-derived uncharacterized protein YoqM (92 aa).

The first 25 residues, 1–25 (MKLRKVLTGSVLSLGLLVSASPAFA), serve as a signal peptide directing secretion.

This chain is SPbeta prophage-derived uncharacterized protein YoqM (yoqM), found in Bacillus subtilis (strain 168).